The chain runs to 1083 residues: DNA primase (1083 aa).

A CHC2-type zinc finger spans residues 1022 to 1061 (CLRYPHRGGRTAPRTFVSLRVDHHNRLCISLAQQCFATKC).

This sequence belongs to the herpesviridae DNA primase family. As to quaternary structure, associates with the helicase and the primase-associated factor to form the helicase-primase factor.

The protein resides in the host nucleus. Functionally, essential component of the helicase/primase complex. Unwinds the DNA at the replication forks and generates single-stranded DNA for both leading and lagging strand synthesis. The primase initiates primer synthesis and thereby produces large amount of short RNA primers on the lagging strand that the polymerase elongates using dNTPs. In Homo sapiens (Human), this protein is DNA primase.